Here is a 292-residue protein sequence, read N- to C-terminus: Protein LicB (292 aa).

2 consecutive EamA domains span residues 70–139 (ALSG…LLAI) and 160–286 (LGWS…VTLY).

The sequence is that of Protein LicB (licB) from Haemophilus influenzae (strain ATCC 51907 / DSM 11121 / KW20 / Rd).